Reading from the N-terminus, the 140-residue chain is Cystatin-like 1 (140 aa).

The signal sequence occupies residues 1–23 (MEMKARGLRIPLLLLLVTVVVMA). Residues 32-126 (GGFKEKAMSK…CKSLIYSVPW (95 aa)) enclose the Cystatin domain. A glycan (N-linked (GlcNAc...) asparagine) is linked at N45. Cystine bridges form between C94–C104 and C117–C137.

This sequence belongs to the cystatin family. As to expression, highly expressed in testis where it localizes to spermatogonium, spermatocyes and round spermatids. Not detected in spermatozoa. Also detected in epididymis, cerebrum and pituitary.

It is found in the secreted. This is Cystatin-like 1 from Mus musculus (Mouse).